The chain runs to 82 residues: RNA-binding protein Hfq (82 aa).

In terms of domain architecture, Sm spans 9–68 (DPFLNTLRKEHVPVSIYLVNGIKLQGKVDSFDQYVIMLKNTVSQMVYKHAISTIVPGRPV).

It belongs to the Hfq family. In terms of assembly, homohexamer.

Its function is as follows. RNA chaperone that binds small regulatory RNA (sRNAs) and mRNAs to facilitate mRNA translational regulation in response to envelope stress, environmental stress and changes in metabolite concentrations. Also binds with high specificity to tRNAs. The protein is RNA-binding protein Hfq of Methylococcus capsulatus (strain ATCC 33009 / NCIMB 11132 / Bath).